A 978-amino-acid polypeptide reads, in one-letter code: Mast/stem cell growth factor receptor Kit (978 aa).

An N-terminal signal peptide occupies residues Met-1–Ser-25. At Gln-26 to Pro-525 the chain is on the extracellular side. Ig-like C2-type domains follow at residues Pro-27 to Arg-112, Asp-121 to Arg-205, Pro-212 to Val-309, Pro-318 to Asn-411, and Pro-414 to Ala-508. Cysteines 58 and 97 form a disulfide. N-linked (GlcNAc...) asparagine glycosylation is found at Asn-94, Asn-130, and Asn-145. Intrachain disulfides connect Cys-136/Cys-186, Cys-151/Cys-183, and Cys-233/Cys-291. Residues Asn-284, Asn-294, Asn-301, Asn-321, Asn-353, Asn-368, Asn-401, Asn-464, and Asn-487 are each glycosylated (N-linked (GlcNAc...) asparagine). An intrachain disulfide couples Cys-429 to Cys-492. The chain crosses the membrane as a helical span at residues Leu-526–Tyr-546. Over Lys-547–Val-978 the chain is Cytoplasmic. Residues Tyr-548 and Tyr-554 each carry the phosphotyrosine modification. Residue Tyr-569 participates in Mg(2+) binding. Tyr-569 and Tyr-571 each carry phosphotyrosine; by autocatalysis. Positions Tyr-569–Tyr-571 are important for interaction with phosphotyrosine-binding proteins. In terms of domain architecture, Protein kinase spans Leu-590–Ser-939. ATP is bound by residues Gly-597 to Val-604, Lys-624, and Glu-672 to Asp-678. Residues Tyr-704 and Tyr-722 each carry the phosphotyrosine; by autocatalysis modification. Residue Tyr-731 is modified to Phosphotyrosine. Residues Ser-743 and Ser-748 each carry the phosphoserine; by PKC/PRKCA modification. The Proton acceptor role is filled by Asp-794. An ATP-binding site is contributed by Arg-798. Residues Asn-799 and Asp-812 each coordinate Mg(2+). The residue at position 823 (Ser-823) is a Phosphoserine. At Tyr-825 the chain carries Phosphotyrosine; by autocatalysis. Ser-893 carries the phosphoserine modification. Tyr-902 carries the phosphotyrosine modification. Residue Tyr-938 is modified to Phosphotyrosine; by autocatalysis. Ser-961 is modified (phosphoserine).

Belongs to the protein kinase superfamily. Tyr protein kinase family. CSF-1/PDGF receptor subfamily. As to quaternary structure, monomer in the absence of bound KITLG/SCF. Homodimer in the presence of bound KITLG/SCF, forming a heterotetramer with two KITLG/SCF molecules. Interacts (via phosphorylated tyrosine residues) with the adapter proteins GRB2 and GRB7 (via SH2 domain), and SH2B2/APS. Interacts (via C-terminus) with MPDZ (via the tenth PDZ domain). Interacts (via phosphorylated tyrosine residues) with PIK3R1 and PIK3CD. Interacts (via phosphorylated tyrosine) with CRK (isoform Crk-II), FYN, SHC1 and MATK/CHK (via SH2 domain). Interacts with LYN and FES/FPS. Interacts (via phosphorylated tyrosine residues) with the protein phosphatases PTPN6/SHP-1 (via SH2 domain), PTPN11/SHP-2 (via SH2 domain) and PTPRU. Interacts with PLCG1. Interacts with DOK1 and TEC. Interacts with IL1RAP (independent of stimulation with KITLG/SCF). A mast cell-specific KITLG/SCF-induced interleukin-33 signaling complex contains IL1RL1, IL1RAP, KIT and MYD88. Post-translationally, ubiquitinated by SOCS6. KIT is rapidly ubiquitinated after autophosphorylation induced by KITLG/SCF binding, leading to internalization and degradation. Autophosphorylated on tyrosine residues. KITLG/SCF binding promotes autophosphorylation. Phosphorylated tyrosine residues are important for interaction with specific binding partners.

The protein resides in the cell membrane. The catalysed reaction is L-tyrosyl-[protein] + ATP = O-phospho-L-tyrosyl-[protein] + ADP + H(+). Its activity is regulated as follows. Present in an inactive conformation in the absence of bound ligand. KITLG/SCF binding leads to dimerization and activation by autophosphorylation on tyrosine residues. Activity is down-regulated by PRKCA-mediated phosphorylation on serine residues. Tyrosine-protein kinase that acts as a cell-surface receptor for the cytokine KITLG/SCF and plays an essential role in the regulation of cell survival and proliferation, hematopoiesis, stem cell maintenance, gametogenesis, mast cell development, migration and function, and in melanogenesis. In response to KITLG/SCF binding, KIT can activate several signaling pathways. Phosphorylates PIK3R1, PLCG1, SH2B2/APS and CBL. Activates the AKT1 signaling pathway by phosphorylation of PIK3R1, the regulatory subunit of phosphatidylinositol 3-kinase. Activated KIT also transmits signals via GRB2 and activation of RAS, RAF1 and the MAP kinases MAPK1/ERK2 and/or MAPK3/ERK1. Promotes activation of STAT family members STAT1, STAT3, STAT5A and STAT5B. Activation of PLCG1 leads to the production of the cellular signaling molecules diacylglycerol and inositol 1,4,5-trisphosphate. KIT signaling is modulated by protein phosphatases, and by rapid internalization and degradation of the receptor. Activated KIT promotes phosphorylation of the protein phosphatases PTPN6/SHP-1 and PTPRU, and of the transcription factors STAT1, STAT3, STAT5A and STAT5B. Promotes phosphorylation of PIK3R1, CBL, CRK (isoform Crk-II), LYN, MAPK1/ERK2 and/or MAPK3/ERK1, PLCG1, SRC and SHC1. This chain is Mast/stem cell growth factor receptor Kit (KIT), found in Capra hircus (Goat).